The primary structure comprises 156 residues: ATP synthase subunit b (156 aa).

The helical transmembrane segment at 11 to 31 (LIAFVVFVIFCMKYVWPPIIG) threads the bilayer.

It belongs to the ATPase B chain family. F-type ATPases have 2 components, F(1) - the catalytic core - and F(0) - the membrane proton channel. F(1) has five subunits: alpha(3), beta(3), gamma(1), delta(1), epsilon(1). F(0) has three main subunits: a(1), b(2) and c(10-14). The alpha and beta chains form an alternating ring which encloses part of the gamma chain. F(1) is attached to F(0) by a central stalk formed by the gamma and epsilon chains, while a peripheral stalk is formed by the delta and b chains.

The protein resides in the cell inner membrane. Its function is as follows. F(1)F(0) ATP synthase produces ATP from ADP in the presence of a proton or sodium gradient. F-type ATPases consist of two structural domains, F(1) containing the extramembraneous catalytic core and F(0) containing the membrane proton channel, linked together by a central stalk and a peripheral stalk. During catalysis, ATP synthesis in the catalytic domain of F(1) is coupled via a rotary mechanism of the central stalk subunits to proton translocation. Component of the F(0) channel, it forms part of the peripheral stalk, linking F(1) to F(0). The protein is ATP synthase subunit b of Colwellia psychrerythraea (strain 34H / ATCC BAA-681) (Vibrio psychroerythus).